The chain runs to 364 residues: MKFNEFLNHLSNYEPGKDIEVIAKEYGVKEVIKLASNENPFGTPPKAIECLRQNANKAHLYPDDSMIELKSTLAQKYKVQNENIIIGAGSDQVIEFAIHAKLNSKNAFLQAGVTFAMYEIYAKQCGAKCYKTQSITHDLNEFKKLYEAHKDEIKLIFLCLPNNPLGECLDASEVTKFIKGVDEDCLVVIDAAYNEFASFKDSKKHLEPCELIKEFDNVLYLGTFSKLYGLGGLRIGYGIANANIISAFYKLRAPFNVSNLALKAAVAAINDDEFAKKTLENNFSQMELYKEFAKKHNIKIIDSYTNFITYFFNEKNSTDLSEKLLKKGIIIRNLKSYGLNAIRITIGTSYENEKFFTEFDKILR.

Residue Lys-226 is modified to N6-(pyridoxal phosphate)lysine.

It belongs to the class-II pyridoxal-phosphate-dependent aminotransferase family. Histidinol-phosphate aminotransferase subfamily. As to quaternary structure, homodimer. Requires pyridoxal 5'-phosphate as cofactor.

It carries out the reaction L-histidinol phosphate + 2-oxoglutarate = 3-(imidazol-4-yl)-2-oxopropyl phosphate + L-glutamate. It participates in amino-acid biosynthesis; L-histidine biosynthesis; L-histidine from 5-phospho-alpha-D-ribose 1-diphosphate: step 7/9. This Campylobacter jejuni (strain RM1221) protein is Histidinol-phosphate aminotransferase.